A 403-amino-acid polypeptide reads, in one-letter code: Conserved oligomeric Golgi complex subunit 5 (403 aa).

This sequence belongs to the COG5 family. In terms of assembly, component of the conserved oligomeric Golgi (COG or Sec34/Sec35) complex which consists of eight different proteins COG1-COG8.

It is found in the golgi apparatus membrane. Functionally, acts as a component of the peripheral membrane COG complex that is involved in intra-Golgi protein trafficking. COG is located at the cis-Golgi, and regulates tethering of retrograde intra-Golgi vesicles and possibly a number of other membrane trafficking events. The polypeptide is Conserved oligomeric Golgi complex subunit 5 (COG5) (Saccharomyces cerevisiae (strain ATCC 204508 / S288c) (Baker's yeast)).